A 381-amino-acid polypeptide reads, in one-letter code: 2-epi-5-epi-valiolone synthase (381 aa).

NAD(+) contacts are provided by residues Asp-50, 81 to 84 (EEAK), 114 to 118 (GIVLD), 138 to 139 (TS), Lys-151, Lys-160, and 178 to 181 (FLDT). Lys-151 is a catalytic residue. Residues Glu-193, His-264, and His-280 each contribute to the a divalent metal cation site.

This sequence belongs to the sugar phosphate cyclases superfamily. EEVS family. NAD(+) serves as cofactor. The cofactor is Co(2+).

It catalyses the reaction D-sedoheptulose 7-phosphate = 2-epi-5-epi-valiolone + phosphate. Its pathway is antibiotic biosynthesis. Functionally, catalyzes the cyclization of D-sedoheptulose 7-phosphate to 2-epi-5-epi-valiolone. Involved in cetoniacytone A biosynthesis. The protein is 2-epi-5-epi-valiolone synthase of Actinomyces sp.